We begin with the raw amino-acid sequence, 199 residues long: Pyridoxal 5'-phosphate synthase subunit PdxT (199 aa).

An L-glutamine-binding site is contributed by 49–51; that stretch reads GES. The active-site Nucleophile is C81. Residues R110 and 139–140 each bind L-glutamine; that span reads IR. Catalysis depends on charge relay system residues H175 and E177.

The protein belongs to the glutaminase PdxT/SNO family. In the presence of PdxS, forms a dodecamer of heterodimers. Only shows activity in the heterodimer.

It carries out the reaction aldehydo-D-ribose 5-phosphate + D-glyceraldehyde 3-phosphate + L-glutamine = pyridoxal 5'-phosphate + L-glutamate + phosphate + 3 H2O + H(+). The catalysed reaction is L-glutamine + H2O = L-glutamate + NH4(+). Its pathway is cofactor biosynthesis; pyridoxal 5'-phosphate biosynthesis. Functionally, catalyzes the hydrolysis of glutamine to glutamate and ammonia as part of the biosynthesis of pyridoxal 5'-phosphate. The resulting ammonia molecule is channeled to the active site of PdxS. The sequence is that of Pyridoxal 5'-phosphate synthase subunit PdxT from Frankia alni (strain DSM 45986 / CECT 9034 / ACN14a).